A 511-amino-acid chain; its full sequence is 2-isopropylmalate synthase (511 aa).

A Pyruvate carboxyltransferase domain is found at 6 to 269 (IIIFDTTLRD…YTDIKCENIF (264 aa)). Residues Asp-15, His-203, His-205, and Asn-239 each contribute to the Mn(2+) site. A regulatory domain region spans residues 394–511 (ILEKLSVISG…SLKVEERKMA (118 aa)).

The protein belongs to the alpha-IPM synthase/homocitrate synthase family. LeuA type 1 subfamily. As to quaternary structure, homodimer. Mn(2+) serves as cofactor.

The protein resides in the cytoplasm. The catalysed reaction is 3-methyl-2-oxobutanoate + acetyl-CoA + H2O = (2S)-2-isopropylmalate + CoA + H(+). It participates in amino-acid biosynthesis; L-leucine biosynthesis; L-leucine from 3-methyl-2-oxobutanoate: step 1/4. Functionally, catalyzes the condensation of the acetyl group of acetyl-CoA with 3-methyl-2-oxobutanoate (2-ketoisovalerate) to form 3-carboxy-3-hydroxy-4-methylpentanoate (2-isopropylmalate). The protein is 2-isopropylmalate synthase of Campylobacter jejuni subsp. jejuni serotype O:6 (strain 81116 / NCTC 11828).